The chain runs to 183 residues: Beta-defensin 129 (183 aa).

The first 19 residues, 1–19 (MKLLFPIFASLMLQYQVNT), serve as a signal peptide directing secretion. 3 disulfides stabilise this stretch: Cys27-Cys53, Cys34-Cys48, and Cys38-Cys54. Residues 142 to 183 (ATSAKSNTKESGDSATASPPPAPPPPNILPTPSLELEEAEEQ) form a disordered region. Over residues 159 to 170 (SPPPAPPPPNIL) the composition is skewed to pro residues.

This sequence belongs to the beta-defensin family.

The protein resides in the secreted. Its function is as follows. Has antibacterial activity. This is Beta-defensin 129 (DEFB129) from Macaca fascicularis (Crab-eating macaque).